The following is a 79-amino-acid chain: Probable [Fe-S]-dependent transcriptional repressor (79 aa).

Iron-sulfur cluster-binding residues include cysteine 56, cysteine 61, cysteine 64, and cysteine 71.

The protein belongs to the FeoC family.

In terms of biological role, may function as a transcriptional regulator that controls feoABC expression. The sequence is that of Probable [Fe-S]-dependent transcriptional repressor from Klebsiella pneumoniae (strain 342).